Here is a 302-residue protein sequence, read N- to C-terminus: Pseudouridine-5'-phosphate glycosidase (302 aa).

Glutamate 25 serves as the catalytic Proton donor. Substrate is bound by residues lysine 86 and valine 106. Position 138 (aspartate 138) interacts with Mn(2+). 140-142 (SAD) is a binding site for substrate. The active-site Nucleophile is the lysine 159.

It belongs to the pseudouridine-5'-phosphate glycosidase family. In terms of assembly, homotrimer. It depends on Mn(2+) as a cofactor.

It carries out the reaction D-ribose 5-phosphate + uracil = psi-UMP + H2O. In terms of biological role, catalyzes the reversible cleavage of pseudouridine 5'-phosphate (PsiMP) to ribose 5-phosphate and uracil. Functions biologically in the cleavage direction, as part of a pseudouridine degradation pathway. This chain is Pseudouridine-5'-phosphate glycosidase, found in Jannaschia sp. (strain CCS1).